The chain runs to 313 residues: Mitochondrial uncoupling protein 4 (313 aa).

Solcar repeat units lie at residues 4 to 115 (KSFV…LKNK), 124 to 215 (LNLS…FKEG), and 224 to 309 (DGLG…VRKL). 6 helical membrane passes run 6–26 (FVEGGIASVIAGCSTHPLDLI), 84–104 (AAALFSGVSATLLRQTLYSTT), 130–150 (IGAGLVAGGIGAAVGNPADVA), 189–209 (RGSALTINRAMIVTAAQLASY), 230–250 (VVASFAAGFVASVASNPVDVI), and 282–302 (YKGFVPTVCRQGPFTVVLFVT).

Belongs to the mitochondrial carrier (TC 2.A.29) family. In terms of tissue distribution, expressed in roots, leaves, stems and flowers.

Its subcellular location is the mitochondrion inner membrane. Its function is as follows. PUMPS are mitochondrial transporter proteins that create proton leaks across the inner mitochondrial membrane, thus uncoupling oxidative phosphorylation. This leads to a decrease in the efficiency of oxidative phosphorylation and an increase in heat production. May be involved in protecting plant cells against oxidative stress damage. Recombinant PUMP4, reconstituted into liposomes, transports a wide range of dicarboxylic acids including malate, oxaloacetate and succinate as well as phosphate, sulfate and thiosulfate. However, it is unknown if these transports are of any biological significance in vivo. In Arabidopsis thaliana (Mouse-ear cress), this protein is Mitochondrial uncoupling protein 4 (PUMP4).